A 142-amino-acid polypeptide reads, in one-letter code: Putative pre-16S rRNA nuclease (142 aa).

It belongs to the YqgF nuclease family.

It is found in the cytoplasm. Could be a nuclease involved in processing of the 5'-end of pre-16S rRNA. The polypeptide is Putative pre-16S rRNA nuclease (Staphylococcus haemolyticus (strain JCSC1435)).